A 91-amino-acid chain; its full sequence is Small ribosomal subunit protein bS20 (91 aa).

The tract at residues 1 to 25 (MANTKSAEKRHRQSLKRRARNVTVR) is disordered. Positions 8–20 (EKRHRQSLKRRAR) are enriched in basic residues.

It belongs to the bacterial ribosomal protein bS20 family.

Binds directly to 16S ribosomal RNA. The protein is Small ribosomal subunit protein bS20 of Myxococcus xanthus (strain DK1622).